Here is a 345-residue protein sequence, read N- to C-terminus: Phosphoribosylformylglycinamidine cyclo-ligase (345 aa).

It belongs to the AIR synthase family.

It is found in the cytoplasm. The catalysed reaction is 2-formamido-N(1)-(5-O-phospho-beta-D-ribosyl)acetamidine + ATP = 5-amino-1-(5-phospho-beta-D-ribosyl)imidazole + ADP + phosphate + H(+). The protein operates within purine metabolism; IMP biosynthesis via de novo pathway; 5-amino-1-(5-phospho-D-ribosyl)imidazole from N(2)-formyl-N(1)-(5-phospho-D-ribosyl)glycinamide: step 2/2. The sequence is that of Phosphoribosylformylglycinamidine cyclo-ligase from Shewanella denitrificans (strain OS217 / ATCC BAA-1090 / DSM 15013).